Reading from the N-terminus, the 379-residue chain is MPAQTHISKLTLTNFRNYAALAIDLAPGAVVFSGDNGAGKTNLLEAISLLTPGRGLRRAPYADVAREGGDGGFALHARLDGPDGQVEIGTGISVGEGEGGRRVRINGATARSAEDMLEWLRVVWLTPAMDALFTGPAADRRRFLDRLVLAIDPGHGQRALDYEKAMRGRNRLLTDGSRDDRWFEAIETQMAETGVAIAAARAELVRLLAAMIDRLPDTGPFPQADISLSGDLEAEVSSAPAVDVEERFRRALAGGRDRDRAAGRTLEGPHRSDLLVRHRPKAMPAELCSTGEQKALLVGIVLSHARLTGEMSGMTPILLLDEIAAHLDGGRRAALFSILEELNCQAFMTGTDAALFSSLMGRAQFLTVDHGTVGPTEDA.

34-41 (GDNGAGKT) serves as a coordination point for ATP.

It belongs to the RecF family.

The protein localises to the cytoplasm. Its function is as follows. The RecF protein is involved in DNA metabolism; it is required for DNA replication and normal SOS inducibility. RecF binds preferentially to single-stranded, linear DNA. It also seems to bind ATP. The sequence is that of DNA replication and repair protein RecF from Mesorhizobium japonicum (strain LMG 29417 / CECT 9101 / MAFF 303099) (Mesorhizobium loti (strain MAFF 303099)).